Reading from the N-terminus, the 338-residue chain is Aspartate carbamoyltransferase catalytic subunit (338 aa).

Residues Arg-59 and Thr-60 each coordinate carbamoyl phosphate. Lys-87 provides a ligand contact to L-aspartate. Carbamoyl phosphate-binding residues include Arg-109, His-142, and Gln-145. Residues Arg-182 and Arg-248 each coordinate L-aspartate. Gly-289 and Pro-290 together coordinate carbamoyl phosphate.

Belongs to the aspartate/ornithine carbamoyltransferase superfamily. ATCase family. As to quaternary structure, heterododecamer (2C3:3R2) of six catalytic PyrB chains organized as two trimers (C3), and six regulatory PyrI chains organized as three dimers (R2).

It catalyses the reaction carbamoyl phosphate + L-aspartate = N-carbamoyl-L-aspartate + phosphate + H(+). The protein operates within pyrimidine metabolism; UMP biosynthesis via de novo pathway; (S)-dihydroorotate from bicarbonate: step 2/3. Its function is as follows. Catalyzes the condensation of carbamoyl phosphate and aspartate to form carbamoyl aspartate and inorganic phosphate, the committed step in the de novo pyrimidine nucleotide biosynthesis pathway. The protein is Aspartate carbamoyltransferase catalytic subunit of Synechococcus elongatus (strain ATCC 33912 / PCC 7942 / FACHB-805) (Anacystis nidulans R2).